Consider the following 203-residue polypeptide: Akirin-2 (203 aa).

2 positions are modified to phosphoserine: serine 18 and serine 21. The short motif at 22–27 (PKRRRC) is the Nuclear localization signal element. Serine 57 bears the Phosphoserine mark. Residues 200 to 203 (SYVS) carry the SYVS motif motif.

Belongs to the akirin family. As to quaternary structure, homodimer. Interacts with IPO9; the interaction is direct. Associates (via SYVS motif) with 20S and 26S proteasomes. Interacts with SMARCD1; promoting SWI/SNF complex recruitment. Interacts with NFKBIZ. Interacts with YWHAB. In terms of processing, polyubiquitinated. Polyubiquitination is dependent of UBR5 that extends pre-ubiquitinated AKIRIN2. Widely expressed with the highest expression in peripheral blood leukocytes.

It localises to the nucleus. It is found in the cytoplasm. The protein resides in the membrane. Its function is as follows. Molecular adapter that acts as a bridge between a variety of multiprotein complexes, and which is involved in embryonic development, immunity, myogenesis and brain development. Plays a key role in nuclear protein degradation by promoting import of proteasomes into the nucleus: directly binds to fully assembled 20S proteasomes at one end and to nuclear import receptor IPO9 at the other end, bridging them together and mediating the import of pre-assembled proteasome complexes through the nuclear pore. Involved in innate immunity by regulating the production of interleukin-6 (IL6) downstream of Toll-like receptor (TLR): acts by bridging the NF-kappa-B inhibitor NFKBIZ and the SWI/SNF complex, leading to promote induction of IL6. Also involved in adaptive immunity by promoting B-cell activation. Involved in brain development: required for the survival and proliferation of cerebral cortical progenitor cells. Involved in myogenesis: required for skeletal muscle formation and skeletal development, possibly by regulating expression of muscle differentiation factors. Also plays a role in facilitating interdigital tissue regression during limb development. The protein is Akirin-2 of Homo sapiens (Human).